We begin with the raw amino-acid sequence, 81 residues long: Exodeoxyribonuclease 7 small subunit (81 aa).

The protein belongs to the XseB family. Heterooligomer composed of large and small subunits.

The protein resides in the cytoplasm. It catalyses the reaction Exonucleolytic cleavage in either 5'- to 3'- or 3'- to 5'-direction to yield nucleoside 5'-phosphates.. Functionally, bidirectionally degrades single-stranded DNA into large acid-insoluble oligonucleotides, which are then degraded further into small acid-soluble oligonucleotides. This Paramagnetospirillum magneticum (strain ATCC 700264 / AMB-1) (Magnetospirillum magneticum) protein is Exodeoxyribonuclease 7 small subunit.